The following is a 542-amino-acid chain: Cytochrome P450 79B1 (542 aa).

The chain crosses the membrane as a helical span at residues 21 to 41; sequence FSNMYLLTTLQAFVAITLVML. Residue cysteine 478 participates in heme binding.

It belongs to the cytochrome P450 family. Heme is required as a cofactor.

The protein localises to the membrane. In terms of biological role, converts tyrosine to para-hydrophenylacetaldoxime in para-hydroxybenzylglucosinolate biosynthesis. The protein is Cytochrome P450 79B1 (CYP79B1) of Sinapis alba (White mustard).